The chain runs to 166 residues: MTDENQAAPAEQAQEPVLQIQRIYVKDVSFEAPNLPDIFQQEWKPNLNFDLGTEAKQLGENLFEVTLNVSVETTLEDSGDAAFICEVKQAGVFTIGGLTDIQLTHALTSQCPNMLFPYARELVASLVNRGTFPPLNLAPVNFDALFLEHMRRVEEESAPEEQPTLN.

Belongs to the SecB family. Homotetramer, a dimer of dimers. One homotetramer interacts with 1 SecA dimer.

It is found in the cytoplasm. Its function is as follows. One of the proteins required for the normal export of preproteins out of the cell cytoplasm. It is a molecular chaperone that binds to a subset of precursor proteins, maintaining them in a translocation-competent state. It also specifically binds to its receptor SecA. This Actinobacillus succinogenes (strain ATCC 55618 / DSM 22257 / CCUG 43843 / 130Z) protein is Protein-export protein SecB.